A 799-amino-acid chain; its full sequence is MANILKKIYDNDRRELKKFEKLATKVESLGDEYEKLSDEQLQAKTPEFRKRLKNGETLDDILPEAFATAREGAKRVLGLYPFRVQIIGGIALHYGNIAEMMTGEGKTLTATLPVYLNALTGKGVHVVTVNEYLSSRDESEMGQLYKWLGLSVGLNLNSMSADEKRDAYNCDVTYSTNSELGFDYLRDNMVVYKDQMVQRPLNYAIIDEVDSILIDEARTPLIISGQAEQANSEYIRADRFVKTLVEDKSDDDVDDDEDHGDYKIDWPTKTINLTNQGIKKACEHFGLKNLYDIDNQVLVHHIDQALRANYIMLKDIDYVVQNGEVMIVDSFTGRVMEGRRYSDGLHQAIEAKEGVKIQEESKTQATITYQNFFRMYKKLAGMTGTAKTEEEEFREIYNMEVITIPTNRPIARKDLPDILYPTLDSKFEAVVKEIKERHAKGQPVLVGTVAIESSERLSQMLNQAGIPHAVLNAKNHAKEAEIIMNAGQRGAVTIATNMAGRGTDIKLGPGVKELGGLAVIGTERHESRRIDNQLRGRSGRQGDPGVTRFYLSLEDDLMKRFGGDRVKLFLDRISDNDDDKVIESRMITKQVESAQKRVEGNNYDTRKQTLQYDDVMRTQREIIYGERMQVISEDKSLKPVLMPMIKRTIDHQIDMYTQGDKKDWRNDQIRDFISSAITDEETTKKLNMKHLSAEELKKRLYQIAEDNYAEKEKQLADPEQMLEFEKVVILRVVDERWTDHIDAMDQLRQSISLRGYGQLNPLVEYQESGYRMFEEMISNIEFDATRLFMKAQIRQNISR.

ATP is bound by residues Q85, 103–107 (GEGKT), and D504.

It belongs to the SecA family. Monomer and homodimer. Part of the essential Sec protein translocation apparatus which comprises SecA, SecYEG and auxiliary proteins SecDF. Other proteins may also be involved.

It is found in the cell membrane. It localises to the cytoplasm. The enzyme catalyses ATP + H2O + cellular proteinSide 1 = ADP + phosphate + cellular proteinSide 2.. Functionally, part of the Sec protein translocase complex. Interacts with the SecYEG preprotein conducting channel. Has a central role in coupling the hydrolysis of ATP to the transfer of proteins into and across the cell membrane, serving as an ATP-driven molecular motor driving the stepwise translocation of polypeptide chains across the membrane. In Lactobacillus johnsonii (strain CNCM I-12250 / La1 / NCC 533), this protein is Protein translocase subunit SecA 1.